Reading from the N-terminus, the 236-residue chain is MKLNIAYPVNGTQKTVEVDDEHRVRVFYDKRIGQEIEGEAVGDEFKGYTFKITGGNDKQGFPMKQGVLLPTRVKLLLAKGHSCYRPRRSGERKRKSVRGAIVGPDLAVLSLVIVKKGEQELEGVTDATVPKRLGPKRANHIRKFFGLTKEDDVRDFVIRREVTKGEKTYTKAPKIQRLVTPQRLQRKRYQRNLKVRNAQAQREAAAEYAQLLAKRLAERKAEKAETRKRRASSLKA.

Phosphoserine occurs at positions 232 and 233.

Belongs to the eukaryotic ribosomal protein eS6 family. Post-translationally, phosphorylated.

This is Small ribosomal subunit protein eS6 (RPS6A) from Candida glabrata (strain ATCC 2001 / BCRC 20586 / JCM 3761 / NBRC 0622 / NRRL Y-65 / CBS 138) (Yeast).